Reading from the N-terminus, the 470-residue chain is Adenosylhomocysteinase (470 aa).

Substrate contacts are provided by threonine 61, aspartate 136, and glutamate 196. 197 to 199 (TTT) contacts NAD(+). Substrate-binding residues include lysine 226 and aspartate 230. NAD(+) contacts are provided by residues asparagine 231, 260-265 (GYGDVG), glutamate 283, asparagine 318, 339-341 (IGH), and asparagine 384.

Belongs to the adenosylhomocysteinase family. The cofactor is NAD(+).

The protein resides in the cytoplasm. The enzyme catalyses S-adenosyl-L-homocysteine + H2O = L-homocysteine + adenosine. It participates in amino-acid biosynthesis; L-homocysteine biosynthesis; L-homocysteine from S-adenosyl-L-homocysteine: step 1/1. Its function is as follows. May play a key role in the regulation of the intracellular concentration of adenosylhomocysteine. The protein is Adenosylhomocysteinase of Aromatoleum aromaticum (strain DSM 19018 / LMG 30748 / EbN1) (Azoarcus sp. (strain EbN1)).